Here is a 261-residue protein sequence, read N- to C-terminus: Cytochrome c oxidase subunit 3 (261 aa).

At 1-15 the chain is on the mitochondrial matrix side; that stretch reads MAHQSHAYHMVKPSP. Residues 16-34 traverse the membrane as a helical segment; it reads WPLTGALSALLTTSGLTMW. Residues 35–40 are Mitochondrial intermembrane-facing; it reads FHFHST. Residues 41–66 traverse the membrane as a helical segment; it reads TLLLTGLLTNALTMYQWWRDVVREST. Topologically, residues 67–72 are mitochondrial matrix; sequence YQGHHT. A helical membrane pass occupies residues 73-105; sequence LPVQKGLRYGMILFITSEVFFFAGFFWAFYHSS. The Mitochondrial intermembrane portion of the chain corresponds to 106-128; the sequence is LAPTPQLGGHWPPTGIIPLNPLE. Residues 129–152 form a helical membrane-spanning segment; the sequence is VPLLNTSVLLASGVSITWAHHSLM. At 153-155 the chain is on the mitochondrial matrix side; sequence ENN. A helical transmembrane segment spans residues 156–183; the sequence is RTQMIQALLITILLGIYFTLLQASEYIE. Over 184-190 the chain is Mitochondrial intermembrane; it reads APFTISD. A helical membrane pass occupies residues 191–223; it reads GIYGSTFFMATGFHGLHVIIGSTFLTVCLARQL. Residues 224–232 are Mitochondrial matrix-facing; that stretch reads LFHFTSKHH. A helical membrane pass occupies residues 233–256; sequence FGFEAAAWYWHFVDVVWLFLYVSI. The Mitochondrial intermembrane segment spans residues 257–261; that stretch reads YWWGS.

This sequence belongs to the cytochrome c oxidase subunit 3 family. In terms of assembly, component of the cytochrome c oxidase (complex IV, CIV), a multisubunit enzyme composed of 14 subunits. The complex is composed of a catalytic core of 3 subunits MT-CO1, MT-CO2 and MT-CO3, encoded in the mitochondrial DNA, and 11 supernumerary subunits COX4I, COX5A, COX5B, COX6A, COX6B, COX6C, COX7A, COX7B, COX7C, COX8 and NDUFA4, which are encoded in the nuclear genome. The complex exists as a monomer or a dimer and forms supercomplexes (SCs) in the inner mitochondrial membrane with NADH-ubiquinone oxidoreductase (complex I, CI) and ubiquinol-cytochrome c oxidoreductase (cytochrome b-c1 complex, complex III, CIII), resulting in different assemblies (supercomplex SCI(1)III(2)IV(1) and megacomplex MCI(2)III(2)IV(2)).

It is found in the mitochondrion inner membrane. It carries out the reaction 4 Fe(II)-[cytochrome c] + O2 + 8 H(+)(in) = 4 Fe(III)-[cytochrome c] + 2 H2O + 4 H(+)(out). Functionally, component of the cytochrome c oxidase, the last enzyme in the mitochondrial electron transport chain which drives oxidative phosphorylation. The respiratory chain contains 3 multisubunit complexes succinate dehydrogenase (complex II, CII), ubiquinol-cytochrome c oxidoreductase (cytochrome b-c1 complex, complex III, CIII) and cytochrome c oxidase (complex IV, CIV), that cooperate to transfer electrons derived from NADH and succinate to molecular oxygen, creating an electrochemical gradient over the inner membrane that drives transmembrane transport and the ATP synthase. Cytochrome c oxidase is the component of the respiratory chain that catalyzes the reduction of oxygen to water. Electrons originating from reduced cytochrome c in the intermembrane space (IMS) are transferred via the dinuclear copper A center (CU(A)) of subunit 2 and heme A of subunit 1 to the active site in subunit 1, a binuclear center (BNC) formed by heme A3 and copper B (CU(B)). The BNC reduces molecular oxygen to 2 water molecules using 4 electrons from cytochrome c in the IMS and 4 protons from the mitochondrial matrix. This is Cytochrome c oxidase subunit 3 (MT-CO3) from Pongo abelii (Sumatran orangutan).